Consider the following 236-residue polypeptide: Dual specificity protein phosphatase 15 (236 aa).

Gly2 carries the N-myristoyl glycine lipid modification. Positions 4–144 (GMTKVLPGLY…LEEFGWANSQ (141 aa)) constitute a Tyrosine-protein phosphatase domain. Catalysis depends on Cys88, which acts as the Phosphocysteine intermediate. The disordered stretch occupies residues 178 to 213 (GPGTSAPSATTASSAASEGTLQRLVPRSPRESHRPL). Over residues 181-194 (TSAPSATTASSAAS) the composition is skewed to low complexity.

This sequence belongs to the protein-tyrosine phosphatase family. Non-receptor class dual specificity subfamily.

The protein resides in the cell membrane. The enzyme catalyses O-phospho-L-tyrosyl-[protein] + H2O = L-tyrosyl-[protein] + phosphate. The catalysed reaction is O-phospho-L-seryl-[protein] + H2O = L-seryl-[protein] + phosphate. It catalyses the reaction O-phospho-L-threonyl-[protein] + H2O = L-threonyl-[protein] + phosphate. In terms of biological role, may play a role in the regulation of oligodendrocyte differentiation. May play a role in the regulation of myelin formation. Involved in the regulation of Erk1/2 phosphorylation in Schwann cells; the signaling may be linked to the regulation of myelination. May dephosphorylate MAPK13, ATF2, ERBB3, PDGFRB and SNX6. This Rattus norvegicus (Rat) protein is Dual specificity protein phosphatase 15 (Dusp15).